The sequence spans 149 residues: Ribosome maturation factor RimP (149 aa).

Belongs to the RimP family.

It localises to the cytoplasm. Required for maturation of 30S ribosomal subunits. The protein is Ribosome maturation factor RimP of Clostridium acetobutylicum (strain ATCC 824 / DSM 792 / JCM 1419 / IAM 19013 / LMG 5710 / NBRC 13948 / NRRL B-527 / VKM B-1787 / 2291 / W).